A 593-amino-acid polypeptide reads, in one-letter code: MLTLQEKLANLPTTPGVYMMKDENGKVIYVGKAVNLRNRVRQYFQNSDMTPKTRLMVKKIKDFEYIVTDTEVEALILECNLIKEYRPKYNVLLRDDKNYQYIKITNEMFPRLVTTRKVEKDGAKYFGPYVSGYSVKQTIELLKSLFMLRTCKRKFPDQLGKGRPCLNFYIERCLGVCKGDIPEEEYQKLVEKAVKVLSGKGDEIVEELKKKMFEYADNLMFEKAQEIKNKITSLEQIITKQKVIYADDRSEDVINYAEDSSNICIVVLVIRNGKLINKEEFVLKNDEEVFERFLEQYYSDVVSVPKEIILPHEVGNGENIEKMIEKLYGFKAKIVVPKQGEKKQLLEMAKKNAEISLVNKQRIENYYIEALLHLKNLLGIEHDIEKIESYDISNLAGADNVGTLVVFEDGKFNKDLYRKFKLKSFEGQDDIRSVKEVLTRRFTNLEKHGRLPDLILIDGGQNQVNAAVEVLRSLGFNIPVAGMVKDDRHKTRDLIYKGQELNIQRDSLVFKLISTIQEETHRFAVKYHRELRKKHLYESILDEIEGIGEKRKIKLFRIFGSIDNLRKASIEEIVKAADIPYDIALKIKEKIGI.

The GIY-YIG domain maps to 13–91 (TTPGVYMMKD…IKEYRPKYNV (79 aa)). A UVR domain is found at 202-237 (DEIVEELKKKMFEYADNLMFEKAQEIKNKITSLEQI).

This sequence belongs to the UvrC family. In terms of assembly, interacts with UvrB in an incision complex.

It is found in the cytoplasm. Functionally, the UvrABC repair system catalyzes the recognition and processing of DNA lesions. UvrC both incises the 5' and 3' sides of the lesion. The N-terminal half is responsible for the 3' incision and the C-terminal half is responsible for the 5' incision. The chain is UvrABC system protein C from Caldicellulosiruptor saccharolyticus (strain ATCC 43494 / DSM 8903 / Tp8T 6331).